The sequence spans 1571 residues: Pentafunctional AROM polypeptide (1571 aa).

Residues 1–380 (MTSVEKVSIL…YQLKAHQVSK (380 aa)) are 3-dehydroquinate synthase. NAD(+) contacts are provided by residues 43–45 (DTN), 81–84 (ENNK), 112–114 (GGV), and D117. R128 is a 7-phospho-2-dehydro-3-deoxy-D-arabino-heptonate binding site. Residue 137 to 138 (TS) coordinates NAD(+). 2 residues coordinate 7-phospho-2-dehydro-3-deoxy-D-arabino-heptonate: D144 and K150. NAD(+) is bound at residue K159. Residue N160 coordinates 7-phospho-2-dehydro-3-deoxy-D-arabino-heptonate. Residues 177–180 (FLET) and N188 contribute to the NAD(+) site. E192 lines the Zn(2+) pocket. 7-phospho-2-dehydro-3-deoxy-D-arabino-heptonate contacts are provided by residues 192–195 (EVVK) and K244. E254 acts as the Proton acceptor; for 3-dehydroquinate synthase activity in catalysis. 7-phospho-2-dehydro-3-deoxy-D-arabino-heptonate is bound by residues 258–262 (RNLLN) and H265. Residue H265 participates in Zn(2+) binding. H269 (proton acceptor; for 3-dehydroquinate synthase activity) is an active-site residue. 7-phospho-2-dehydro-3-deoxy-D-arabino-heptonate contacts are provided by H281 and K352. H281 is a binding site for Zn(2+). The EPSP synthase stretch occupies residues 393-843 (VHPFDDKLIP…WDILHTKFKV (451 aa)). Residue C825 is the For EPSP synthase activity of the active site. Residues 868-1058 (KRSIIVIGMR…IPKKRSFYTS (191 aa)) are shikimate kinase. 875–882 (GMRGAGKS) is a binding site for ATP. The tract at residues 1059–1271 (LTFSDLTEVA…GNEGALDVAQ (213 aa)) is 3-dehydroquinase. K1204 acts as the Schiff-base intermediate with substrate; for 3-dehydroquinate dehydratase activity in catalysis. The segment at 1284-1571 (EKHFWIVGNP…DVVHDAVVNQ (288 aa)) is shikimate dehydrogenase.

It in the N-terminal section; belongs to the sugar phosphate cyclases superfamily. Dehydroquinate synthase family. In the 2nd section; belongs to the EPSP synthase family. The protein in the 3rd section; belongs to the shikimate kinase family. This sequence in the 4th section; belongs to the type-I 3-dehydroquinase family. It in the C-terminal section; belongs to the shikimate dehydrogenase family. In terms of assembly, homodimer. Zn(2+) serves as cofactor.

It is found in the cytoplasm. The enzyme catalyses 7-phospho-2-dehydro-3-deoxy-D-arabino-heptonate = 3-dehydroquinate + phosphate. It carries out the reaction 3-dehydroquinate = 3-dehydroshikimate + H2O. The catalysed reaction is shikimate + NADP(+) = 3-dehydroshikimate + NADPH + H(+). It catalyses the reaction shikimate + ATP = 3-phosphoshikimate + ADP + H(+). The enzyme catalyses 3-phosphoshikimate + phosphoenolpyruvate = 5-O-(1-carboxyvinyl)-3-phosphoshikimate + phosphate. It participates in metabolic intermediate biosynthesis; chorismate biosynthesis; chorismate from D-erythrose 4-phosphate and phosphoenolpyruvate: step 2/7. It functions in the pathway metabolic intermediate biosynthesis; chorismate biosynthesis; chorismate from D-erythrose 4-phosphate and phosphoenolpyruvate: step 3/7. The protein operates within metabolic intermediate biosynthesis; chorismate biosynthesis; chorismate from D-erythrose 4-phosphate and phosphoenolpyruvate: step 4/7. Its pathway is metabolic intermediate biosynthesis; chorismate biosynthesis; chorismate from D-erythrose 4-phosphate and phosphoenolpyruvate: step 5/7. It participates in metabolic intermediate biosynthesis; chorismate biosynthesis; chorismate from D-erythrose 4-phosphate and phosphoenolpyruvate: step 6/7. Its function is as follows. The AROM polypeptide catalyzes 5 consecutive enzymatic reactions in prechorismate polyaromatic amino acid biosynthesis. The sequence is that of Pentafunctional AROM polypeptide from Scheffersomyces stipitis (strain ATCC 58785 / CBS 6054 / NBRC 10063 / NRRL Y-11545) (Yeast).